Here is a 715-residue protein sequence, read N- to C-terminus: 1,4-alpha-glucan branching enzyme GlgB (715 aa).

Catalysis depends on Asp-399, which acts as the Nucleophile. The active-site Proton donor is the Glu-452.

It belongs to the glycosyl hydrolase 13 family. GlgB subfamily. In terms of assembly, monomer.

It catalyses the reaction Transfers a segment of a (1-&gt;4)-alpha-D-glucan chain to a primary hydroxy group in a similar glucan chain.. It functions in the pathway glycan biosynthesis; glycogen biosynthesis. Catalyzes the formation of the alpha-1,6-glucosidic linkages in glycogen by scission of a 1,4-alpha-linked oligosaccharide from growing alpha-1,4-glucan chains and the subsequent attachment of the oligosaccharide to the alpha-1,6 position. This chain is 1,4-alpha-glucan branching enzyme GlgB, found in Rhodopseudomonas palustris (strain BisA53).